The following is a 202-amino-acid chain: Pyridoxal 5'-phosphate synthase subunit PdxT (202 aa).

49-51 provides a ligand contact to L-glutamine; the sequence is GES. The active-site Nucleophile is the cysteine 81. L-glutamine contacts are provided by residues arginine 110 and 139–140; that span reads IR. Catalysis depends on charge relay system residues histidine 182 and glutamate 184.

Belongs to the glutaminase PdxT/SNO family. As to quaternary structure, in the presence of PdxS, forms a dodecamer of heterodimers. Only shows activity in the heterodimer.

It carries out the reaction aldehydo-D-ribose 5-phosphate + D-glyceraldehyde 3-phosphate + L-glutamine = pyridoxal 5'-phosphate + L-glutamate + phosphate + 3 H2O + H(+). The enzyme catalyses L-glutamine + H2O = L-glutamate + NH4(+). It participates in cofactor biosynthesis; pyridoxal 5'-phosphate biosynthesis. In terms of biological role, catalyzes the hydrolysis of glutamine to glutamate and ammonia as part of the biosynthesis of pyridoxal 5'-phosphate. The resulting ammonia molecule is channeled to the active site of PdxS. This chain is Pyridoxal 5'-phosphate synthase subunit PdxT, found in Rhodococcus jostii (strain RHA1).